Reading from the N-terminus, the 204-residue chain is Recombination protein RecR (204 aa).

The C4-type zinc-finger motif lies at 58–75 (CSVCQNITDLGVDPCHIC). Positions 83 to 181 (SVICVVESPT…NVTRIARGIP (99 aa)) constitute a Toprim domain.

This sequence belongs to the RecR family.

Its function is as follows. May play a role in DNA repair. It seems to be involved in an RecBC-independent recombinational process of DNA repair. It may act with RecF and RecO. This Chlorobaculum tepidum (strain ATCC 49652 / DSM 12025 / NBRC 103806 / TLS) (Chlorobium tepidum) protein is Recombination protein RecR.